The primary structure comprises 117 residues: MPRVKRGVQARARHKKVLKQAKGYYGARSRVYRVAFQAVTKAGQYAYRDRRAKKRQFRQLWIARINAASRQNGLSYSRFINGLKKASIEIDRKILADIAVFDKAAFAVLVEKAKAAL.

It belongs to the bacterial ribosomal protein bL20 family.

In terms of biological role, binds directly to 23S ribosomal RNA and is necessary for the in vitro assembly process of the 50S ribosomal subunit. It is not involved in the protein synthesizing functions of that subunit. The chain is Large ribosomal subunit protein bL20 from Vibrio campbellii (strain ATCC BAA-1116).